The chain runs to 55 residues: Riparin-1.4 (55 aa).

Positions 1 to 15 (MKIIVVLAVLMLVSA) are cleaved as a signal peptide. Positions 16 to 41 (QVCLVSAAEMGHSSDNELSSRDLVKR) are excised as a propeptide. A disulfide bond links Cys47 and Cys53. Residues 54-55 (NH) constitute a propeptide that is removed on maturation.

In terms of tissue distribution, expressed by the skin glands.

The protein resides in the secreted. This is Riparin-1.4 from Crinia riparia (Streambank froglet).